Here is a 162-residue protein sequence, read N- to C-terminus: NADH-quinone oxidoreductase subunit I 1 (162 aa).

2 consecutive 4Fe-4S ferredoxin-type domains span residues 44-74 and 90-119; these read LRTY…VQAA and YKYQ…LTQE. [4Fe-4S] cluster is bound by residues Cys54, Cys57, Cys60, Cys64, Cys99, Cys102, Cys105, and Cys109.

The protein belongs to the complex I 23 kDa subunit family. As to quaternary structure, NDH-1 is composed of 14 different subunits. Subunits NuoA, H, J, K, L, M, N constitute the membrane sector of the complex. It depends on [4Fe-4S] cluster as a cofactor.

Its subcellular location is the cell membrane. It catalyses the reaction a quinone + NADH + 5 H(+)(in) = a quinol + NAD(+) + 4 H(+)(out). NDH-1 shuttles electrons from NADH, via FMN and iron-sulfur (Fe-S) centers, to quinones in the respiratory chain. The immediate electron acceptor for the enzyme in this species is believed to be ubiquinone. Couples the redox reaction to proton translocation (for every two electrons transferred, four hydrogen ions are translocated across the cytoplasmic membrane), and thus conserves the redox energy in a proton gradient. The protein is NADH-quinone oxidoreductase subunit I 1 of Symbiobacterium thermophilum (strain DSM 24528 / JCM 14929 / IAM 14863 / T).